We begin with the raw amino-acid sequence, 89 residues long: UPF0223 protein BAMEG_4214 (89 aa).

The protein belongs to the UPF0223 family.

In Bacillus anthracis (strain CDC 684 / NRRL 3495), this protein is UPF0223 protein BAMEG_4214.